We begin with the raw amino-acid sequence, 451 residues long: uncharacterized protein (451 aa).

The first 22 residues, 1-22, serve as a signal peptide directing secretion; the sequence is MKLKLIFSLFLVLVFCSLFVFG. Residues asparagine 25, asparagine 45, asparagine 209, asparagine 326, and asparagine 402 are each glycosylated (N-linked (GlcNAc...) asparagine).

The protein localises to the secreted. This is an uncharacterized protein from Dictyostelium discoideum (Social amoeba).